Here is a 628-residue protein sequence, read N- to C-terminus: Chaperone protein DnaK (628 aa).

Position 174 is a phosphothreonine; by autocatalysis (Thr-174). The segment at 589-628 (AAGGAGPDMGAGAGPDMGAGASNGSAPYGDDVVDGDYKEV) is disordered. Over residues 591–605 (GGAGPDMGAGAGPDM) the composition is skewed to gly residues.

Belongs to the heat shock protein 70 family.

Functionally, acts as a chaperone. In Lachnospira eligens (strain ATCC 27750 / DSM 3376 / VPI C15-48 / C15-B4) (Eubacterium eligens), this protein is Chaperone protein DnaK.